Consider the following 228-residue polypeptide: Protein TIFY 10a (228 aa).

One can recognise a Tify domain in the interval 75 to 110; sequence REQEKRQLTIFYGGKVLVFDDFPAEKAKDLMQMASK. The Jas motif lies at 164-189; the sequence is PQARKASLHRFLEKRKDRLQAKAPYQ. The Nuclear localization signal motif lies at 166–173; sequence ARKASLHR. The disordered stretch occupies residues 175-228; that stretch reads LEKRKDRLQAKAPYQGSPSDASPVKKELQESQPWLGLGPQVAAPDLSLRQESSQ.

Belongs to the TIFY/JAZ family. Interacts with COI1A and COI1B in a coronatine-dependent manner. Coronatine is an analog of jasmonoyl isoleucine (JA-Ile). Ubiquitinated. Targeted for degradation by the SCF(COI1) E3 ubiquitin ligase-proteasome pathway during jasmonate signaling.

The protein localises to the nucleus. Its function is as follows. Repressor of jasmonate responses. The polypeptide is Protein TIFY 10a (Oryza sativa subsp. japonica (Rice)).